A 735-amino-acid chain; its full sequence is Photosystem I P700 chlorophyll a apoprotein A2 (735 aa).

The next 8 membrane-spanning stretches (helical) occupy residues I47–A70, L136–Q159, L176–I200, M274–Y292, L331–Y354, A370–I396, A418–H440, and F518–V536. Residues C560 and C569 each contribute to the [4Fe-4S] cluster site. The next 2 membrane-spanning stretches (helical) occupy residues A576–W597 and L644–I666. Chlorophyll a contacts are provided by H655, M663, and Y671. W672 is a phylloquinone binding site. Residues L708–A728 form a helical membrane-spanning segment.

This sequence belongs to the PsaA/PsaB family. In terms of assembly, the PsaA/B heterodimer binds the P700 chlorophyll special pair and subsequent electron acceptors. PSI consists of a core antenna complex that captures photons, and an electron transfer chain that converts photonic excitation into a charge separation. The eukaryotic PSI reaction center is composed of at least 11 subunits. P700 is a chlorophyll a/chlorophyll a' dimer, A0 is one or more chlorophyll a, A1 is one or both phylloquinones and FX is a shared 4Fe-4S iron-sulfur center. is required as a cofactor.

The protein resides in the plastid. Its subcellular location is the chloroplast thylakoid membrane. The catalysed reaction is reduced [plastocyanin] + hnu + oxidized [2Fe-2S]-[ferredoxin] = oxidized [plastocyanin] + reduced [2Fe-2S]-[ferredoxin]. In terms of biological role, psaA and PsaB bind P700, the primary electron donor of photosystem I (PSI), as well as the electron acceptors A0, A1 and FX. PSI is a plastocyanin/cytochrome c6-ferredoxin oxidoreductase, converting photonic excitation into a charge separation, which transfers an electron from the donor P700 chlorophyll pair to the spectroscopically characterized acceptors A0, A1, FX, FA and FB in turn. Oxidized P700 is reduced on the lumenal side of the thylakoid membrane by plastocyanin or cytochrome c6. In Tetradesmus obliquus (Green alga), this protein is Photosystem I P700 chlorophyll a apoprotein A2.